The chain runs to 132 residues: MNLSDPLGDMLTRIRNGQKARMSVITSPASKLRTNVLEVLKREGYIRGYNVEDVRPGVRNLRIELKYHEGEPVIKEIHRVSKPGRRIYSKIADLPRVYNGLGIAILSTPRGVMSDAEARAANVGGEVLCKVF.

It belongs to the universal ribosomal protein uS8 family. As to quaternary structure, part of the 30S ribosomal subunit. Contacts proteins S5 and S12.

Its function is as follows. One of the primary rRNA binding proteins, it binds directly to 16S rRNA central domain where it helps coordinate assembly of the platform of the 30S subunit. The chain is Small ribosomal subunit protein uS8 from Rhodospirillum centenum (strain ATCC 51521 / SW).